A 220-amino-acid chain; its full sequence is Transcriptional regulatory protein LnrK (220 aa).

The region spanning 3–119 is the Response regulatory domain; sequence KIIITDDQDI…TIVKAVMTVH (117 aa). A 4-aspartylphosphate modification is found at Asp54. Residues 151–216 enclose the HTH luxR-type domain; it reads KPNELLDLTE…QAAIYSVRYG (66 aa). Positions 175-194 form a DNA-binding region, H-T-H motif; that stretch reads NKEIAEKLYITEGTVKNHVS.

In terms of processing, phosphorylated by LnrJ.

The protein localises to the cytoplasm. Its function is as follows. Required for resistance to linearmycins, a family of antibiotic-specialized metabolites produced by some streptomycetes. Member of the two-component regulatory system LnrJ/LnrK, which induces expression of the LnrLMN ABC transporter in response to linearmycins and other polyenes. Probably binds to the promoter region of the lnrLMN operon and directly regulates its expression. May also promote biofilm formation. The protein is Transcriptional regulatory protein LnrK of Bacillus subtilis (strain 168).